The following is a 747-amino-acid chain: MRRSLAPSQLARRKPEDRSSDDEDWQPGTVTPKKRKSSSETQVQECFLSPFRKPLTQLLNRPPCLDSSQHEAFIRSILSKPFKVPIPNYQGPLGSRALGLKRAGVRRALHDPLEEGALVLYEPPPLSAHDQLKLDKEKLPVHVVVDPILSKVLRPHQREGVKFLWECVTSRRIPGSHGCIMADEMGLGKTLQCITLMWTLLRQSPECKPEIEKAVVVSPSSLVKNWYNEVEKWLGGRIQPLAIDGGSKDEIDRKLEGFMNQRGARVPSPILIISYETFRLHVGVLKKGNVGLVICDEGHRLKNSENQTYQALDSLNTSRRVLISGTPIQNDLLEYFSLVHFVNSGILGTAHEFKKHFELPILKSRDAAASEADRQRGEERLRELIGIVNRCLIRRTSDILSKYLPVKIEQVVCCRLTPLQTELYKRFLRQAKPEEELREGKMSVSSLSSITSLKKLCNHPALIYDKCVAEEDGFEGTLGIFPPGYNSKAVEPQLSGKMLVLDYILAVTRSRSSDKVVLVSNYTQTLDLFEKLCRVRRYLYVRLDGTMSIKKRAKVVERFNSPSSPDFVFMLSSKAGGCGLNLIGANRLVMFDPDWNPANDEQAMARVWRDGQKKICYIYRLLSAGTIEEKIFQRQSHKKALSSCVVDEEQDVERHFSLGELKELFTLDEASLSDTHDRLHCRRCVNNRQVWPPPDGSDCTSDLAQWNHSTDKRGLQDEVLQAAWDASSTAITFVFHQRSHEEQRGLH.

The disordered stretch occupies residues 1–42 (MRRSLAPSQLARRKPEDRSSDDEDWQPGTVTPKKRKSSSETQ). The segment at 2-9 (RRSLAPSQ) is required for chromatin remodeling, strand pairing activities and coupling of ATPase activity. A Phosphoserine modification is found at serine 38. Residues 170–345 (SRRIPGSHGC…FSLVHFVNSG (176 aa)) form the Helicase ATP-binding domain. Position 183-190 (183-190 (DEMGLGKT)) interacts with ATP. Positions 296–299 (DEGH) match the DEGH box motif. The Helicase C-terminal domain occupies 500 to 653 (VLDYILAVTR…CVVDEEQDVE (154 aa)). Lysine 515 carries the N6-acetyllysine modification. Serine 572 is modified (phosphoserine; by NEK1).

This sequence belongs to the SNF2/RAD54 helicase family. As to quaternary structure, homohexamer. Interacts (via N-terminus) with RAD51. Interacts with NAP1L1. Interacts with BRD9; this interaction orchestrates RAD51-RAD54 complex formation. Post-translationally, acetylated. Acetylation promotes interaction with BRD9, and subsequently with RAD54, which is essential for homologous recombination (HR). In terms of processing, phosphorylated. Phosphorylation at Ser-572 by NEK1 specifically in G2 phase allows efficient removal of RAD51 filaments from DNA. As to expression, hardly detectable in most tissues. Dramatically increased in thymus, spleen and testis.

It localises to the nucleus. It catalyses the reaction ATP + H2O = ADP + phosphate + H(+). Functionally, plays an essential role in homologous recombination (HR) which is a major pathway for repairing DNA double-strand breaks (DSBs), single-stranded DNA (ssDNA) gaps, and stalled or collapsed replication forks. Acts as a molecular motor during the homology search and guides RAD51 ssDNA along a donor dsDNA thereby changing the homology search from the diffusion-based mechanism to a motor-guided mechanism. Plays also an essential role in RAD51-mediated synaptic complex formation which consists of three strands encased in a protein filament formed once homology is recognized. Once DNA strand exchange occured, dissociates RAD51 from nucleoprotein filaments formed on dsDNA. Deficiency also resulted in an increased frequency of end-to-end chromosome fusions involving telomeres compared to the controls, suggesting a putative role in telomere capping. Non-homologous end joining (NHEJ) and homologous recombination (HR) represent the two major pathways of DNA double-strand break (DSB) repair in eukaryotic cells. LIG4 and RAD54L cooperate to support cellular proliferation, repair spontaneous DSBs, and prevent chromosome and single chromatid aberrations. This chain is DNA repair and recombination protein RAD54-like (Rad54l), found in Mus musculus (Mouse).